A 309-amino-acid polypeptide reads, in one-letter code: Olfactory receptor 2G3 (309 aa).

Residues 1–25 lie on the Extracellular side of the membrane; that stretch reads MGLGNESSLMDFILLGFSDHPRLEA. A glycan (N-linked (GlcNAc...) asparagine) is linked at Asn5. A helical transmembrane segment spans residues 26-49; it reads VLFVFVLFFYLLTLVGNFTIIIIS. Residues 50–57 lie on the Cytoplasmic side of the membrane; the sequence is YLDPPLHT. A helical membrane pass occupies residues 58–79; sequence PMYFFLSNLSLLDICFTTSLAP. Topologically, residues 80-100 are extracellular; it reads QTLVNLQRPKKTITYGGCVAQ. A disulfide bond links Cys97 and Cys189. Residues 101–120 traverse the membrane as a helical segment; that stretch reads LYISLALGSTECILLADMAL. Residues 121–139 are Cytoplasmic-facing; the sequence is DRYIAVCKPLHYVVIMNPR. Residues 140-158 form a helical membrane-spanning segment; it reads LCQQLASISWLSGLASSLI. Residues 159–195 lie on the Extracellular side of the membrane; the sequence is HATFTLQLPLCGNHRLDHFICEVPALLKLACVDTTVN. A helical membrane pass occupies residues 196–219; that stretch reads ELVLFVVSVLFVVIPPALISISYG. Topologically, residues 220 to 236 are cytoplasmic; that stretch reads FITQAVLRIKSVEARHK. A helical membrane pass occupies residues 237–259; sequence AFSTCSSHLTVVIIFYGTIIYVY. At 260-272 the chain is on the extracellular side; that stretch reads LQPSDSYAQDQGK. The chain crosses the membrane as a helical span at residues 273-292; it reads FISLFYTMVTPTLNPIIYTL. Residues 293-309 are Cytoplasmic-facing; that stretch reads RNKDMKEALRKLLSGKL.

This sequence belongs to the G-protein coupled receptor 1 family.

The protein localises to the cell membrane. Odorant receptor. The polypeptide is Olfactory receptor 2G3 (OR2G3) (Homo sapiens (Human)).